Consider the following 226-residue polypeptide: Sugar fermentation stimulation protein homolog (226 aa).

It belongs to the SfsA family.

The polypeptide is Sugar fermentation stimulation protein homolog (Picrophilus torridus (strain ATCC 700027 / DSM 9790 / JCM 10055 / NBRC 100828 / KAW 2/3)).